A 201-amino-acid chain; its full sequence is Putative Ras-related protein Rab-1C (201 aa).

GTP is bound by residues Gly-15 to Cys-23, Tyr-33 to Thr-40, and Asp-63 to Gln-67. The short motif at Tyr-37 to Phe-45 is the Effector region element. Ser-76 is subject to (Microbial infection) O-(2-cholinephosphoryl)serine. Residues Asn-121 to Asp-124 and Ser-151 to Lys-153 each bind GTP. A disordered region spans residues Gly-174–Cys-201. Residues Cys-200 and Cys-201 are each lipidated (S-geranylgeranyl cysteine).

It belongs to the small GTPase superfamily. Rab family. Post-translationally, (Microbial infection) Phosphocholinated at Ser-76 by L.pneumophila AnkX, leading to displace GDP dissociation inhibitors (GDI). Both GDP-bound and GTP-bound forms can be phosphocholinated. Dephosphocholinated by L.pneumophila Lem3, restoring accessibility to L.pneumophila GTPase effector LepB. (Microbial infection) Glycosylated by S.typhimurium protein Ssek3: arginine GlcNAcylation prevents GTPase activity, thereby disrupting vesicular protein transport from the endoplasmic reticulum (ER) to the Golgi compartment.

It localises to the membrane. The protein localises to the cytoplasm. It carries out the reaction GTP + H2O = GDP + phosphate + H(+). Protein transport. Probably involved in vesicular traffic. The sequence is that of Putative Ras-related protein Rab-1C (RAB1C) from Homo sapiens (Human).